The sequence spans 439 residues: Branched-chain amino acid permease BrnQ (439 aa).

At methionine 1–aspartate 9 the chain is on the cytoplasmic side. A helical membrane pass occupies residues isoleucine 10–proline 30. Over proline 31–threonine 43 the chain is Periplasmic. The chain crosses the membrane as a helical span at residues alanine 44–alanine 64. The Cytoplasmic segment spans residues lysine 65–lysine 79. Residues valine 80–proline 100 traverse the membrane as a helical segment. At arginine 101 to serine 118 the chain is on the periplasmic side. A helical transmembrane segment spans residues alanine 119–tyrosine 139. Residues proline 140–asparagine 149 lie on the Cytoplasmic side of the membrane. A helical transmembrane segment spans residues phenylalanine 150–proline 170. At alanine 171 to glycine 189 the chain is on the periplasmic side. The chain crosses the membrane as a helical span at residues phenylalanine 190–valine 210. Topologically, residues asparagine 211–arginine 226 are cytoplasmic. A helical membrane pass occupies residues tyrosine 227–phenylalanine 247. The Periplasmic segment spans residues arginine 248 to glycine 277. A helical membrane pass occupies residues alanine 278 to leucine 298. The Cytoplasmic segment spans residues threonine 299–threonine 316. The chain crosses the membrane as a helical span at residues leucine 317–isoleucine 337. Glutamine 338 is a topological domain (periplasmic). The chain crosses the membrane as a helical span at residues isoleucine 339–phenylalanine 359. Over threonine 360–arginine 369 the chain is Cytoplasmic. Residues isoleucine 370–serine 390 form a helical membrane-spanning segment. At alanine 391–proline 404 the chain is on the periplasmic side. Residues leucine 405–isoleucine 425 form a helical membrane-spanning segment. Over tryptophan 426–histidine 439 the chain is Cytoplasmic.

Belongs to the branched chain amino acid transporter family.

It is found in the cell inner membrane. In terms of biological role, liv-II branched chain amino acid transport system, which transports leucine, valine and isoleucine. The sequence is that of Branched-chain amino acid permease BrnQ from Salmonella typhimurium (strain LT2 / SGSC1412 / ATCC 700720).